Here is a 235-residue protein sequence, read N- to C-terminus: Aspartate/glutamate leucyltransferase (235 aa).

The protein belongs to the R-transferase family. Bpt subfamily.

The protein resides in the cytoplasm. It catalyses the reaction N-terminal L-glutamyl-[protein] + L-leucyl-tRNA(Leu) = N-terminal L-leucyl-L-glutamyl-[protein] + tRNA(Leu) + H(+). It carries out the reaction N-terminal L-aspartyl-[protein] + L-leucyl-tRNA(Leu) = N-terminal L-leucyl-L-aspartyl-[protein] + tRNA(Leu) + H(+). Its function is as follows. Functions in the N-end rule pathway of protein degradation where it conjugates Leu from its aminoacyl-tRNA to the N-termini of proteins containing an N-terminal aspartate or glutamate. This Pseudomonas fluorescens (strain SBW25) protein is Aspartate/glutamate leucyltransferase.